A 221-amino-acid polypeptide reads, in one-letter code: Phosphatidylethanolamine-binding protein homolog F40A3.3 (221 aa).

The protein belongs to the phosphatidylethanolamine-binding protein family.

The sequence is that of Phosphatidylethanolamine-binding protein homolog F40A3.3 from Caenorhabditis elegans.